We begin with the raw amino-acid sequence, 181 residues long: Isopentenyl-diphosphate Delta-isomerase (181 aa).

Mn(2+) is bound by residues H25 and H32. Positions 30–164 (PLHLAFSCWL…PWAFSPWMVM (135 aa)) constitute a Nudix hydrolase domain. The active site involves C67. H69 is a Mn(2+) binding site. Residue E87 participates in Mg(2+) binding. 2 residues coordinate Mn(2+): E114 and E116. Residue E116 is part of the active site.

It belongs to the IPP isomerase type 1 family. In terms of assembly, homodimer. Requires Mg(2+) as cofactor. The cofactor is Mn(2+).

It localises to the cytoplasm. It catalyses the reaction isopentenyl diphosphate = dimethylallyl diphosphate. It functions in the pathway isoprenoid biosynthesis; dimethylallyl diphosphate biosynthesis; dimethylallyl diphosphate from isopentenyl diphosphate: step 1/1. Its function is as follows. Catalyzes the 1,3-allylic rearrangement of the homoallylic substrate isopentenyl (IPP) to its highly electrophilic allylic isomer, dimethylallyl diphosphate (DMAPP). This Salmonella paratyphi B (strain ATCC BAA-1250 / SPB7) protein is Isopentenyl-diphosphate Delta-isomerase.